The chain runs to 121 residues: Small ribosomal subunit protein bS16 (121 aa).

Residues 97–114 (LAKAKTKDGDNDSSKAES) are compositionally biased toward basic and acidic residues. The disordered stretch occupies residues 97 to 121 (LAKAKTKDGDNDSSKAESESNEAET).

Belongs to the bacterial ribosomal protein bS16 family.

The polypeptide is Small ribosomal subunit protein bS16 (Prochlorococcus marinus (strain MIT 9301)).